The primary structure comprises 264 residues: Thiazole synthase (264 aa).

K106 functions as the Schiff-base intermediate with DXP in the catalytic mechanism. Residues G167, 193–194 (AG), and 215–216 (NT) contribute to the 1-deoxy-D-xylulose 5-phosphate site.

The protein belongs to the ThiG family. As to quaternary structure, homotetramer. Forms heterodimers with either ThiH or ThiS.

It is found in the cytoplasm. It carries out the reaction [ThiS sulfur-carrier protein]-C-terminal-Gly-aminoethanethioate + 2-iminoacetate + 1-deoxy-D-xylulose 5-phosphate = [ThiS sulfur-carrier protein]-C-terminal Gly-Gly + 2-[(2R,5Z)-2-carboxy-4-methylthiazol-5(2H)-ylidene]ethyl phosphate + 2 H2O + H(+). It participates in cofactor biosynthesis; thiamine diphosphate biosynthesis. Catalyzes the rearrangement of 1-deoxy-D-xylulose 5-phosphate (DXP) to produce the thiazole phosphate moiety of thiamine. Sulfur is provided by the thiocarboxylate moiety of the carrier protein ThiS. In vitro, sulfur can be provided by H(2)S. This is Thiazole synthase from Stenotrophomonas maltophilia (strain R551-3).